Here is a 906-residue protein sequence, read N- to C-terminus: MSHHKKRVYPQAQFQYGAGVPPAGIPVSDASIIPPQVQSPQVGATDNMIPPYNQTPTMNQMEQAPQAQMFTPAQQQLNQQINSVTTNMGAMNIGTPMMEQMPQQMTPQPQMYGQSQGLMGHSNKPMNQLYPVDLLTELPPPIHDLMLPPPPLMVSPDKMLVPSETANASSDYLRCTLNAMPKNGSLLKKSKLPLALVIRPYQHLHDEVNPPPLNEDGLVVRCRRCRSYMNPFVTFIEQGRRWRCNFCRLANDVPMQLDQSFEGAPANRYERNEIKHSVMEYLAPKEYTVRQPPPSTYIFVLDVSQNAVKNGLLATTARSILDTLEFLPNHDNRTRVSILAVDNSLHYFSIPLDEESDQIRMMDISDIDEPFLPKPHSMIVPLNECRNNLEKLLTQLPEIFQFNIMSKFALGPALKAAQNMISNLGGKIVVVSATLPNIGIGKLQRRNESGVANTPKESTQLLSCQDAFYKNFTITCSKSQVSVDLFLASEDYMDVASLSNLGRFTGGQTHFYPGFTAANIADVTKFTKEFSKFLSMDLSTETVMRARGSTGIRMSAFYGHFFNRSSDLCAFSTMPRDQSYVFEMSIDENIGTEYCYVQIAVLLSLNTSQRRIRIITVAIPTTESLSEVYASADQLAIADFFTKKAVEKAMNSSLQDARDLLNKSLQDILATYKKEIVVSNTAGGAPLRFCANLRMLPLLVHALSKHTAFRAGIVPSDHRAAALNNLESMPLKYLVKSAYARVYSLHDMVDEAGYPDENGEIVLPEPINASASLFERYGLYLIDNSSELFLWVGGDAVPELVNDVFGLQDIFQIPNGKHELAIVEGSEFNERVRNIIQKVREHDDVITYQTLYIVRGPSVSEPVGHAAGRELQPLRMWATSNLVEDKVLGTESYREFLQTLKNKLNK.

Cys-222, Cys-225, Cys-244, and Cys-247 together coordinate Zn(2+). The zinc finger-like stretch occupies residues 222–247 (CRRCRSYMNPFVTFIEQGRRWRCNFC).

This sequence belongs to the SEC23/SEC24 family. SEC24 subfamily. The COPII coat is composed of at least 5 proteins: the SEC23/24 complex, the SEC13/31 complex, and the protein SAR1. Golgi apparatus membrane; Peripheral membrane protein; Cytoplasmic side.

It localises to the cytoplasm. Its subcellular location is the cytoplasmic vesicle. The protein localises to the COPII-coated vesicle membrane. It is found in the endoplasmic reticulum membrane. The protein resides in the golgi apparatus membrane. Its function is as follows. Component of the coat protein complex II (COPII) which promotes the formation of transport vesicles from the endoplasmic reticulum (ER). The coat has two main functions, the physical deformation of the endoplasmic reticulum membrane into vesicles and the selection of cargo molecules. The chain is Protein transport protein SEC24-2 (SEC242) from Candida glabrata (strain ATCC 2001 / BCRC 20586 / JCM 3761 / NBRC 0622 / NRRL Y-65 / CBS 138) (Yeast).